We begin with the raw amino-acid sequence, 359 residues long: Protein RecA (359 aa).

74 to 81 (GPESSGKT) is a binding site for ATP.

This sequence belongs to the RecA family.

Its subcellular location is the cytoplasm. Functionally, can catalyze the hydrolysis of ATP in the presence of single-stranded DNA, the ATP-dependent uptake of single-stranded DNA by duplex DNA, and the ATP-dependent hybridization of homologous single-stranded DNAs. It interacts with LexA causing its activation and leading to its autocatalytic cleavage. This Anaplasma marginale (strain Florida) protein is Protein RecA.